The sequence spans 161 residues: Ribosome maturation factor RimP (161 aa).

This sequence belongs to the RimP family.

It is found in the cytoplasm. In terms of biological role, required for maturation of 30S ribosomal subunits. The protein is Ribosome maturation factor RimP of Myxococcus xanthus (strain DK1622).